A 388-amino-acid chain; its full sequence is Homeobox protein XHOX-3 (388 aa).

2 disordered regions span residues 30 to 109 and 131 to 163; these read AVGS…SDFY and SAGQCSEPMGGSPVNGSDSSKGGGGSHGSFSAC. Polar residues-rich tracts occupy residues 68–81 and 91–103; these read ATGQQRSRSPQLRI and DSLSTKGQHSSSD. Positions 168–227 form a DNA-binding region, homeobox; that stretch reads MRRYRTAFTREQIARLEKEFYRENYVSRPRRCELAAALNLPETTIKVWFQNRRMKDKRQR.

It belongs to the even-skipped homeobox family.

Its subcellular location is the nucleus. May be required for posterior development and development of normal embryonic axial pattern. This Xenopus laevis (African clawed frog) protein is Homeobox protein XHOX-3 (xhox3).